A 43-amino-acid polypeptide reads, in one-letter code: Oxygen-evolving enhancer protein 2 (43 aa).

Belongs to the PsbP family.

It localises to the plastid. The protein localises to the chloroplast thylakoid membrane. Functionally, may be involved in the regulation of photosystem II. This is Oxygen-evolving enhancer protein 2 from Physcomitrium patens (Spreading-leaved earth moss).